A 358-amino-acid chain; its full sequence is Phospho-N-acetylmuramoyl-pentapeptide-transferase (358 aa).

Helical transmembrane passes span 28 to 48 (AALM…ITWL), 70 to 90 (TPTM…LLWA), 92 to 112 (LTNI…AVGF), 133 to 153 (MGGQ…NPDY), 165 to 185 (VTFD…VAAS), 196 to 216 (GLAI…IYIT), 233 to 253 (VGEV…FLWF), 260 to 280 (VFMG…LALL), 285 to 305 (LVLA…IVQV), and 335 to 355 (KIII…LSVL).

Belongs to the glycosyltransferase 4 family. MraY subfamily. It depends on Mg(2+) as a cofactor.

It localises to the cell inner membrane. It carries out the reaction UDP-N-acetyl-alpha-D-muramoyl-L-alanyl-gamma-D-glutamyl-meso-2,6-diaminopimeloyl-D-alanyl-D-alanine + di-trans,octa-cis-undecaprenyl phosphate = di-trans,octa-cis-undecaprenyl diphospho-N-acetyl-alpha-D-muramoyl-L-alanyl-D-glutamyl-meso-2,6-diaminopimeloyl-D-alanyl-D-alanine + UMP. It participates in cell wall biogenesis; peptidoglycan biosynthesis. Functionally, catalyzes the initial step of the lipid cycle reactions in the biosynthesis of the cell wall peptidoglycan: transfers peptidoglycan precursor phospho-MurNAc-pentapeptide from UDP-MurNAc-pentapeptide onto the lipid carrier undecaprenyl phosphate, yielding undecaprenyl-pyrophosphoryl-MurNAc-pentapeptide, known as lipid I. This chain is Phospho-N-acetylmuramoyl-pentapeptide-transferase, found in Desulfovibrio desulfuricans (strain ATCC 27774 / DSM 6949 / MB).